We begin with the raw amino-acid sequence, 1846 residues long: MEQLTTLPRLGDLGAMEPWALPAWQHWTQGQGCKPGDASPSIAGTPTALQVKGLRFEESSKPEGAHSPGPVGNTDPEATETGLPKLGQQAESPGYSCSGLEEEEAQAYKAKFNIGFGDRPNLELLRALGELQQRCTILKEENQMLRKSSFPETEEKVRRLKRKNAELAVIAKRLEERAQKLQETNMRVVSAPVPRPGSSLELCRKALARQRARDLSETASALLAKDKQIAALQRECRELQARLSLVGKEGPQWLHMRDFDRLLRESQREVLRLQRQIALRNQREPLRPARSPGPTAPSRVGAPAPGAPGEAVLQDDVESPQVVLREPEKQQRVQQLESELCKKRKKCESLEQEARKKQRRCEELELQLRAAQNENARLVEENSRLSGRATEKEQVEWENSELKGQLLGVTQERDSALLKSQGLQSKLESLEQVLKHMREVAQRRQQLEVEHEQARLSLQEKQEEVRRLQQAQAEAKREHEGAVQLLESTLDSMQARVRELEGQCRSQTERFSLLAQELQAFRLHPGPLDLLTSALGCSALGDHPPPHCCCSIPQPCQGSGPKDLDLPPGSPGRCTPKSSEPALTTLTGIPRRTAKKAESLSNSSRSESIHNSPKSCPTPEVDTASEVEELEVDSVSLLPAAPESHSGGARIQVFLARYSYNPFEGPNENPEAELPLTAGEYIYIYGNMDEDGFFEGELMDGRRGLVPSNFVERVSDDDLLSTLPRELADSSHSSGPELSFLSGGGGGCSSGGQSSGGRSQPRPEEEAAGDELSLSPPPEGLGEPLAVPYPRHITVLKQLAHSVVLAWELPPERVDLRGFHIFVNGELRQALGPGVPPKAVLENMDLRTGPLHVSVQALTSKGSSDPLRCCLAVGAGAGVVPSQLRIHRLTATSAEIAWVPGNSNLAHAIYLNGEECPPARPSTYWATFCNLRPGTLYQARVEAQIPSQGPWEPGWERPEQRAATLQFTTLPAGLPDAPLDVQAEPGPSPGILMISWLPVTIDAAGTSNGVRVTGYAIYADGQKIMEVASPTAGSVLVEVSQLQLLQACHEVTVRTMSPHGESSDSIPAPVAPALASACQPARMSCLSPRPSPEVRTPLASVSPGLGDTSFPLRHPVPHGTQDFSASLSIEMSKGPQEEPPVPCSQEEAGAAVRSISEEKRAIEPTLGQEGPEPVAPSLAKQEVECTSGDAGPVPCSTQGELTQKKPSIEACHGGDLDSGLKLRSEKEDMSELGVHLVNSLVDHSRNSDLSDIQEEEEEEEEEEEELGSRPCSSQKQVAGNSIRENGAKPQPDPFCETDSDEEILEQILELPLQRLCSKKLFSIPEEEEEEEEEEGLEKPGPSRTSQDPSQPELALLGPGCDSSQPQGPGLCPLSPELSGVREHLEDVLGVVGGNGRRRGGGSPEKLPNRKRPQDPREHCSRLLGNGGPQASARPVPPRERGSLPVIEGTRVGQEPGGRGRPGLSRRCPRGPAPESSLVSCLSPKCLEISIEYDSEDEQEAGSGGVSINSSCYPTDGEAWGTAAVGRPRGPPKVNPGPNAYLRLPAWEKGEPERRGRSAIGRTKEPPSRATETGESRGQDNSGRRGPQRRGARVPRSGTTELAPPRSPQEAPPHQDLPVRVFVALFDYDPVSMSPNPDAGEEELPFKEGQLLKVFGDKDADGFYRGESGGRTGYIPCNMVAEVAVDSPAGRQQLLQRGFLPPNVLTEASGNGPSVYSSAHTPGPPPKPRRSKKVELEGPTQLCPGPPKLIHSAAQKTSRPMVAAFDYNPRENSPNMDVEAELPFRAGDVITVFGNMDDDGFYYGELNGQRGLVPSNFLEGPGPESGSLESGTSQAESQRTRRRRVQC.

3 disordered regions span residues 57–97, 281–318, and 560–628; these read EESS…GYSC, NQRE…DDVE, and GPKD…SEVE. The segment covering 576–587 has biased composition (polar residues); that stretch reads PKSSEPALTTLT. Positions 599–612 are enriched in low complexity; that stretch reads SLSNSSRSESIHNS. Residues 649–716 form the SH3 1 domain; that stretch reads ARIQVFLARY…PSNFVERVSD (68 aa). Positions 726–785 are disordered; the sequence is ELADSSHSSGPELSFLSGGGGGCSSGGQSSGGRSQPRPEEEAAGDELSLSPPPEGLGEPL. Residues 742–755 show a composition bias toward gly residues; the sequence is SGGGGGCSSGGQSS. Fibronectin type-III domains lie at 787-878, 880-972, and 977-1075; these read VPYP…AGAG, VPSQ…TLPA, and APLD…PALA. 7 disordered regions span residues 1084 to 1107, 1163 to 1219, 1243 to 1302, 1322 to 1476, 1492 to 1617, 1704 to 1755, and 1812 to 1846; these read SCLS…GLGD, EPTL…LDSG, HSRN…SDEE, SIPE…PESS, YDSE…QDLP, LTEA…AAQK, and VPSN…RVQC. Over residues 1202–1219 the composition is skewed to basic and acidic residues; sequence TQKKPSIEACHGGDLDSG. The span at 1251 to 1265 shows a compositional bias: acidic residues; the sequence is DIQEEEEEEEEEEEE. Over residues 1270–1283 the composition is skewed to polar residues; sequence PCSSQKQVAGNSIR. A compositionally biased stretch (acidic residues) spans 1324–1335; sequence PEEEEEEEEEEG. 2 stretches are compositionally biased toward basic and acidic residues: residues 1411 to 1420 and 1545 to 1577; these read RPQDPREHCS and AWEK…ESRG. The SH3 2 domain maps to 1616-1684; the sequence is LPVRVFVALF…PCNMVAEVAV (69 aa). The span at 1705-1719 shows a compositional bias: polar residues; it reads TEASGNGPSVYSSAH. One can recognise an SH3 3 domain in the interval 1755 to 1822; sequence KTSRPMVAAF…PSNFLEGPGP (68 aa). Residues 1817–1830 show a composition bias toward low complexity; sequence LEGPGPESGSLESG.

It belongs to the RIMBP family. Interacts with RIMS1 and RIMS2. Interacts with TSPO. Interacts with CACNA1A. In terms of tissue distribution, predominantly expressed in the brain.

Its subcellular location is the cytoplasm. The protein resides in the mitochondrion. Its function is as follows. Required for synaptic transmission regulation. It probably controls the recruitement of voltage-gated calcium channels to the presynaptic membrane, and modulates neurotransmitter release. In Mus musculus (Mouse), this protein is Peripheral-type benzodiazepine receptor-associated protein 1.